We begin with the raw amino-acid sequence, 109 residues long: MSQGVEFNRLMLEMRSMQMEAMAKAKPVQAPAEAGAPSFSEMLSQAVGKVNETQQASTAMANAFEVGQSGVDLTDVMIASQKASVSFQAMTQVRNKLVQAYQDIMQMPV.

This sequence belongs to the FliE family.

It is found in the bacterial flagellum basal body. The sequence is that of Flagellar hook-basal body complex protein FliE from Pseudomonas paraeruginosa (strain DSM 24068 / PA7) (Pseudomonas aeruginosa (strain PA7)).